Here is a 378-residue protein sequence, read N- to C-terminus: 3-dehydroquinate synthase (378 aa).

NAD(+) contacts are provided by residues Gly-115–Asp-119, Thr-139–Ser-140, Lys-152, and Lys-161. Residues Glu-194, His-256, and His-275 each coordinate Zn(2+).

Belongs to the sugar phosphate cyclases superfamily. Dehydroquinate synthase family. Requires Co(2+) as cofactor. The cofactor is Zn(2+). NAD(+) is required as a cofactor.

Its subcellular location is the cytoplasm. It catalyses the reaction 7-phospho-2-dehydro-3-deoxy-D-arabino-heptonate = 3-dehydroquinate + phosphate. The protein operates within metabolic intermediate biosynthesis; chorismate biosynthesis; chorismate from D-erythrose 4-phosphate and phosphoenolpyruvate: step 2/7. Catalyzes the conversion of 3-deoxy-D-arabino-heptulosonate 7-phosphate (DAHP) to dehydroquinate (DHQ). This Brucella canis (strain ATCC 23365 / NCTC 10854 / RM-666) protein is 3-dehydroquinate synthase.